Consider the following 196-residue polypeptide: N-(5'-phosphoribosyl)anthranilate isomerase (196 aa).

Belongs to the TrpF family.

It carries out the reaction N-(5-phospho-beta-D-ribosyl)anthranilate = 1-(2-carboxyphenylamino)-1-deoxy-D-ribulose 5-phosphate. The protein operates within amino-acid biosynthesis; L-tryptophan biosynthesis; L-tryptophan from chorismate: step 3/5. The polypeptide is N-(5'-phosphoribosyl)anthranilate isomerase (Nitratiruptor sp. (strain SB155-2)).